Reading from the N-terminus, the 486-residue chain is MASIRELHEQLVKKERSAVEITQETLDHIQELEPKLHSFLHITAQQALEQARAVDAKIAAGEEIGLLAGIPIGVKDNMCTKGIPTTCASRILENFVPPYESTVTQKLLDAGAVVVGKTNLDEFAMGSSTENSAYQVTANPWDLSRVPGGSSGGSAAAVAAEECVVALGSDTGGSIRQPASFCGVVGLKPTYGLVSRYGLVAYASSLDQIGPFGKSVEDTAILLKAIAGYDPKDSTSLKVEIPDYVASLKPDLKARGKLRIGVIKETFGEGLDSVVEQAVTKAIEQLQRLGAEIHVISCPNFRYGVPSYYIIAPSEASANLARYDGVKYGWRAPEGDNLLSMYKRTRATGFGAEVKRRIMIGTYALSAGYYDAYYLKAQKVRTLIKQDFENAFKNVDVLVSPTAPTTAFKAGEKTADPISMYLNDLMTIPVNLAGLPGLSLPCGFDEQGLPIGLQLIGKVLREDQLLQVAYAYEQSTSWHLSQPKIS.

Active-site charge relay system residues include lysine 75 and serine 150. Serine 174 functions as the Acyl-ester intermediate in the catalytic mechanism.

It belongs to the amidase family. GatA subfamily. As to quaternary structure, heterotrimer of A, B and C subunits.

The catalysed reaction is L-glutamyl-tRNA(Gln) + L-glutamine + ATP + H2O = L-glutaminyl-tRNA(Gln) + L-glutamate + ADP + phosphate + H(+). In terms of biological role, allows the formation of correctly charged Gln-tRNA(Gln) through the transamidation of misacylated Glu-tRNA(Gln) in organisms which lack glutaminyl-tRNA synthetase. The reaction takes place in the presence of glutamine and ATP through an activated gamma-phospho-Glu-tRNA(Gln). In Trichormus variabilis (strain ATCC 29413 / PCC 7937) (Anabaena variabilis), this protein is Glutamyl-tRNA(Gln) amidotransferase subunit A.